Reading from the N-terminus, the 402-residue chain is DNA primase DnaG (402 aa).

The 79-residue stretch at 165-243 (PNLIIVEGRA…KIDFVARAPV (79 aa)) folds into the Toprim domain. 3 residues coordinate Mg(2+): Glu-171, Asp-216, and Asp-218.

This sequence belongs to the archaeal DnaG primase family. In terms of assembly, forms a ternary complex with MCM helicase and DNA. Component of the archaeal exosome complex. Mg(2+) serves as cofactor.

The enzyme catalyses ssDNA + n NTP = ssDNA/pppN(pN)n-1 hybrid + (n-1) diphosphate.. RNA polymerase that catalyzes the synthesis of short RNA molecules used as primers for DNA polymerase during DNA replication. Also part of the exosome, which is a complex involved in RNA degradation. Acts as a poly(A)-binding protein that enhances the interaction between heteromeric, adenine-rich transcripts and the exosome. The polypeptide is DNA primase DnaG (Saccharolobus islandicus (strain Y.N.15.51 / Yellowstone #2) (Sulfolobus islandicus)).